The following is a 371-amino-acid chain: Aspartate-semialdehyde dehydrogenase (371 aa).

Residues 10-13 (RGMV), 37-38 (TS), and Gln-74 each bind NADP(+). Arg-103 lines the phosphate pocket. Cys-136 (acyl-thioester intermediate) is an active-site residue. Residue Gln-163 coordinates substrate. Ser-166 is a binding site for NADP(+). Glu-243 contacts substrate. Residue Lys-246 coordinates phosphate. A substrate-binding site is contributed by Arg-270. The active-site Proton acceptor is His-277. Gln-353 provides a ligand contact to NADP(+).

The protein belongs to the aspartate-semialdehyde dehydrogenase family. In terms of assembly, homodimer.

The catalysed reaction is L-aspartate 4-semialdehyde + phosphate + NADP(+) = 4-phospho-L-aspartate + NADPH + H(+). It participates in amino-acid biosynthesis; L-lysine biosynthesis via DAP pathway; (S)-tetrahydrodipicolinate from L-aspartate: step 2/4. It functions in the pathway amino-acid biosynthesis; L-methionine biosynthesis via de novo pathway; L-homoserine from L-aspartate: step 2/3. Its pathway is amino-acid biosynthesis; L-threonine biosynthesis; L-threonine from L-aspartate: step 2/5. Its function is as follows. Catalyzes the NADPH-dependent formation of L-aspartate-semialdehyde (L-ASA) by the reductive dephosphorylation of L-aspartyl-4-phosphate. The polypeptide is Aspartate-semialdehyde dehydrogenase (Haemophilus influenzae (strain ATCC 51907 / DSM 11121 / KW20 / Rd)).